A 328-amino-acid chain; its full sequence is Malate dehydrogenase (328 aa).

12–18 (GAAGQIG) serves as a coordination point for NAD(+). Substrate is bound by residues Arg95 and Arg101. NAD(+)-binding positions include Asn108, Gln115, and 132–134 (VGN). Positions 134 and 165 each coordinate substrate. Residue His190 is the Proton acceptor of the active site.

The protein belongs to the LDH/MDH superfamily. MDH type 2 family.

The catalysed reaction is (S)-malate + NAD(+) = oxaloacetate + NADH + H(+). In terms of biological role, catalyzes the reversible oxidation of malate to oxaloacetate. This is Malate dehydrogenase from Delftia acidovorans (strain DSM 14801 / SPH-1).